The following is a 332-amino-acid chain: GTPase Obg (332 aa).

Residues 1–159 form the Obg domain; sequence MKFLDQAKIY…RWVWLRLKLI (159 aa). The OBG-type G domain maps to 160-328; that stretch reads ADAGLVGLPN…VLRETLRMIR (169 aa). GTP-binding positions include 166-173, 191-195, 213-216, 280-283, and 309-311; these read GLPNAGKS, FTTLH, DIPG, NKMD, and SAA. 2 residues coordinate Mg(2+): Ser-173 and Thr-193.

Belongs to the TRAFAC class OBG-HflX-like GTPase superfamily. OBG GTPase family. As to quaternary structure, monomer. It depends on Mg(2+) as a cofactor.

The protein localises to the cytoplasm. In terms of biological role, an essential GTPase which binds GTP, GDP and possibly (p)ppGpp with moderate affinity, with high nucleotide exchange rates and a fairly low GTP hydrolysis rate. Plays a role in control of the cell cycle, stress response, ribosome biogenesis and in those bacteria that undergo differentiation, in morphogenesis control. The protein is GTPase Obg of Acidiphilium cryptum (strain JF-5).